Reading from the N-terminus, the 371-residue chain is Putative transport protein YtvI (371 aa).

9 consecutive transmembrane segments (helical) span residues 6-26 (ITIF…IAAA), 30-50 (FPLT…HPVV), 65-85 (VLGV…ILVA), 168-188 (FFAL…ATFF), 225-245 (GFIK…FIGL), 256-276 (IAFL…SVFV), 283-303 (SITG…VVLI), 312-332 (ILSK…FAGF), and 334-354 (LFGF…QAFI).

It belongs to the autoinducer-2 exporter (AI-2E) (TC 2.A.86) family.

The protein resides in the cell membrane. This is Putative transport protein YtvI (ytvI) from Bacillus subtilis (strain 168).